Consider the following 447-residue polypeptide: Eukaryotic translation initiation factor 3 subunit E (447 aa).

The PCI domain maps to 253 to 421; sequence LELFFNAGYI…GTVVMNHPPS (169 aa).

This sequence belongs to the eIF-3 subunit E family. As to quaternary structure, component of the eukaryotic translation initiation factor 3 (eIF-3) complex.

Its subcellular location is the cytoplasm. Functionally, component of the eukaryotic translation initiation factor 3 (eIF-3) complex, which is involved in protein synthesis of a specialized repertoire of mRNAs and, together with other initiation factors, stimulates binding of mRNA and methionyl-tRNAi to the 40S ribosome. The eIF-3 complex specifically targets and initiates translation of a subset of mRNAs involved in cell proliferation. In Chaetomium globosum (strain ATCC 6205 / CBS 148.51 / DSM 1962 / NBRC 6347 / NRRL 1970) (Soil fungus), this protein is Eukaryotic translation initiation factor 3 subunit E.